Here is a 196-residue protein sequence, read N- to C-terminus: dTTP/UTP pyrophosphatase (196 aa).

Asp-72 functions as the Proton acceptor in the catalytic mechanism.

This sequence belongs to the Maf family. YhdE subfamily. A divalent metal cation serves as cofactor.

It is found in the cytoplasm. The catalysed reaction is dTTP + H2O = dTMP + diphosphate + H(+). It carries out the reaction UTP + H2O = UMP + diphosphate + H(+). In terms of biological role, nucleoside triphosphate pyrophosphatase that hydrolyzes dTTP and UTP. May have a dual role in cell division arrest and in preventing the incorporation of modified nucleotides into cellular nucleic acids. The protein is dTTP/UTP pyrophosphatase of Chlamydia felis (strain Fe/C-56) (Chlamydophila felis).